The following is a 372-amino-acid chain: Glutamate 5-kinase (372 aa).

K9 contacts ATP. Residues S49, D136, and N148 each contribute to the substrate site. Residues T168–D169 and T210–K216 contribute to the ATP site. The PUA domain occupies A276–S353.

Belongs to the glutamate 5-kinase family.

The protein resides in the cytoplasm. It catalyses the reaction L-glutamate + ATP = L-glutamyl 5-phosphate + ADP. It functions in the pathway amino-acid biosynthesis; L-proline biosynthesis; L-glutamate 5-semialdehyde from L-glutamate: step 1/2. Catalyzes the transfer of a phosphate group to glutamate to form L-glutamate 5-phosphate. This chain is Glutamate 5-kinase, found in Shouchella clausii (strain KSM-K16) (Alkalihalobacillus clausii).